Reading from the N-terminus, the 459-residue chain is Cysteine--tRNA ligase (459 aa).

Cysteine 31 contributes to the Zn(2+) binding site. Residues 33–43 (PTVYDNPHIGN) carry the 'HIGH' region motif. The Zn(2+) site is built by cysteine 216, histidine 241, and glutamate 245. The 'KMSKS' region signature appears at 274-278 (KMSKS). Position 277 (lysine 277) interacts with ATP.

It belongs to the class-I aminoacyl-tRNA synthetase family. As to quaternary structure, monomer. It depends on Zn(2+) as a cofactor.

It localises to the cytoplasm. It catalyses the reaction tRNA(Cys) + L-cysteine + ATP = L-cysteinyl-tRNA(Cys) + AMP + diphosphate. This Rickettsia massiliae (strain Mtu5) protein is Cysteine--tRNA ligase.